A 769-amino-acid polypeptide reads, in one-letter code: Integrin beta-2 (769 aa).

An N-terminal signal peptide occupies residues 1-22 (MLCRCSPLLLLVGLLTLRSALS). Q23 bears the Pyrrolidone carboxylic acid mark. The Extracellular segment spans residues 23–700 (QECAKYKVST…ETRECVKGPN (678 aa)). In terms of domain architecture, PSI spans 24 to 74 (ECAKYKVSTCRDCIESGPGCAWCQKLNFSGQGEPDSVRCDTREQLLAKGCV). 28 disulfide bridges follow: C25–C43, C33–C447, C36–C62, C46–C73, C191–C198, C246–C286, C386–C400, C420–C445, C449–C467, C459–C470, C472–C481, C483–C514, C497–C512, C506–C517, C519–C534, C536–C559, C541–C557, C549–C562, C564–C573, C575–C598, C582–C596, C590–C601, C603–C612, C615–C618, C622–C662, C628–C647, C631–C643, and C670–C695. N-linked (GlcNAc...) asparagine glycosylation is found at N50 and N116. One can recognise a VWFA domain in the interval 124–363 (GYPIDLYYLM…ELIKNAYNKL (240 aa)). S136 and S138 together coordinate Mg(2+). Residues S138, D141, D142, and D173 each coordinate Ca(2+). Residues N229, D231, P233, and E234 each coordinate Ca(2+). E234 serves as a coordination point for Mg(2+). A glycan (N-linked (GlcNAc...) asparagine) is linked at N254. Residues D264 and E347 each contribute to the Ca(2+) site. Positions 397 to 399 (RGD) match the Cell attachment site motif. 4 consecutive I-EGF domains span residues 449-482 (CGDS…KHCE), 483-535 (CQTQ…QFCE), 536-574 (CDNM…SACQ), and 575-613 (CLKS…PLCT). An N-linked (GlcNAc...) asparagine glycan is attached at N501. The N-linked (GlcNAc...) asparagine glycan is linked to N642. The helical transmembrane segment at 701 to 723 (IAAIVGGTVGGVVLVGIFLLVIW) threads the bilayer. Topologically, residues 724 to 769 (KVLTHLSDLREYKRFEKEKLKSQWNNDNPLFKSATTTVMNPKFAER) are cytoplasmic. Residues S745 and S756 each carry the phosphoserine modification. Residues T758 and T760 each carry the phosphothreonine modification.

The protein belongs to the integrin beta chain family. As to quaternary structure, heterodimer of an alpha and a beta subunit. The ITGB2 beta subunit associates with the ITGAL, ITGAM, ITGAX or ITGAD alpha subunits. Found in a complex with CD177 and ITGAM/CD11b. Interacts with FGR. Interacts with COPS5 and RANBP9. Interacts with FLNA (via filamin repeats 4, 9, 12, 17, 19, 21, and 23). Interacts with THBD. Both Ser-745 and Ser-756 become phosphorylated when T-cells are exposed to phorbol esters. Phosphorylation on Thr-758 (but not on Ser-756) allows interaction with 14-3-3 proteins.

The protein localises to the cell membrane. It is found in the membrane raft. Integrin ITGAL/ITGB2 is a receptor for ICAM1, ICAM2, ICAM3 and ICAM4. Integrin ITGAL/ITGB2 is also a receptor for the secreted form of ubiquitin-like protein ISG15; the interaction is mediated by ITGAL. Integrins ITGAM/ITGB2 and ITGAX/ITGB2 are receptors for the iC3b fragment of the third complement component and for fibrinogen. Integrin ITGAX/ITGB2 recognizes the sequence G-P-R in fibrinogen alpha-chain. Integrin ITGAM/ITGB2 recognizes P1 and P2 peptides of fibrinogen gamma chain. Integrin ITGAM/ITGB2 is also a receptor for factor X. Integrin ITGAD/ITGB2 is a receptor for ICAM3 and VCAM1. Contributes to natural killer cell cytotoxicity. Involved in leukocyte adhesion and transmigration of leukocytes including T-cells and neutrophils. Triggers neutrophil transmigration during lung injury through PTK2B/PYK2-mediated activation. Integrin alpha-L/beta-2 in association with ICAM3, contributes to apoptotic neutrophil phagocytosis by macrophages. This is Integrin beta-2 (ITGB2) from Sus scrofa (Pig).